The following is a 142-amino-acid chain: Small ribosomal subunit protein bS6 (142 aa).

Positions 110 to 133 are enriched in basic and acidic residues; it reads NKKPSHAKEKHEKTEHTHSHHAEE. The interval 110–142 is disordered; that stretch reads NKKPSHAKEKHEKTEHTHSHHAEEAESVGSHSE.

This sequence belongs to the bacterial ribosomal protein bS6 family.

Functionally, binds together with bS18 to 16S ribosomal RNA. In Helicobacter pylori (strain P12), this protein is Small ribosomal subunit protein bS6.